We begin with the raw amino-acid sequence, 286 residues long: Quinone oxidoreductase 2 (286 aa).

NADP(+) contacts are provided by residues 6–11 (GATGQL), Arg-33, 73–75 (SSS), 138–143 (GWYSEN), and Arg-171.

It belongs to the NmrA-type oxidoreductase family. As to quaternary structure, monomer.

The catalysed reaction is a quinone + NADH + H(+) = a quinol + NAD(+). It carries out the reaction a quinone + NADPH + H(+) = a quinol + NADP(+). Functionally, quinone oxidoreductase that may play some additional role beyond quinone reduction. Potential redox sensor protein. Overexpression induces retardation of growth. This is Quinone oxidoreductase 2 (qorB) from Escherichia coli (strain K12).